We begin with the raw amino-acid sequence, 250 residues long: Triosephosphate isomerase (250 aa).

Residue 9–11 (NWK) participates in substrate binding. H94 (electrophile) is an active-site residue. E165 acts as the Proton acceptor in catalysis. Substrate contacts are provided by residues G171, S211, and 232–233 (GG).

It belongs to the triosephosphate isomerase family. Homodimer.

It localises to the cytoplasm. The catalysed reaction is D-glyceraldehyde 3-phosphate = dihydroxyacetone phosphate. It participates in carbohydrate biosynthesis; gluconeogenesis. Its pathway is carbohydrate degradation; glycolysis; D-glyceraldehyde 3-phosphate from glycerone phosphate: step 1/1. Its function is as follows. Involved in the gluconeogenesis. Catalyzes stereospecifically the conversion of dihydroxyacetone phosphate (DHAP) to D-glyceraldehyde-3-phosphate (G3P). The chain is Triosephosphate isomerase from Alkalilimnicola ehrlichii (strain ATCC BAA-1101 / DSM 17681 / MLHE-1).